The following is a 316-amino-acid chain: Putative metal-binding protein TP_0034 (316 aa).

A signal peptide spans 1-19 (MQRCSVVAALAGVVFLAQA). A divalent metal cation contacts are provided by histidine 68, histidine 146, and histidine 210.

The protein belongs to the bacterial solute-binding protein 9 family.

Its subcellular location is the periplasm. Its function is as follows. Part of an ATP-binding cassette (ABC) transport system involved in metal import. Binds a metal with high affinity and specificity and delivers it to the membrane permease for translocation into the cytoplasm. In Treponema pallidum (strain Nichols), this protein is Putative metal-binding protein TP_0034.